The sequence spans 391 residues: Yellow-related salivary protein ASP4 (391 aa).

A signal peptide spans M1–A18. N29 is a glycosylation site (N-linked (GlcNAc...) asparagine).

This sequence belongs to the major royal jelly protein family. In terms of tissue distribution, female salivary gland (at protein level).

Its subcellular location is the secreted. In terms of biological role, probably modulates blood feeding of sand flies on vertebrate species by binding and sequestering different mediators involved in the host response. Binds biogenic amines. Binds serotonin and dopamine with high affinity. Binds adrenaline, octopamine and adrenaline with medium affinity. Binds histamine with low affinity. In Phlebotomus orientalis (Phlebotomine sand fly), this protein is Yellow-related salivary protein ASP4.